Here is a 470-residue protein sequence, read N- to C-terminus: Na(+)/H(+) antiporter NhaA 2 (470 aa).

The next 11 membrane-spanning stretches (helical) occupy residues 34-54 (FLHI…IALL), 85-105 (LEWV…GMEI), 121-141 (ALPA…YLLL), 150-170 (GWGV…TLLG), 179-199 (VLLL…IAVF), 202-222 (SGVA…VFAM), 241-261 (WAGV…IGLI), 317-337 (SLIA…FALA), 357-377 (LATA…ACWL), 395-415 (LLVL…IAQL), and 423-443 (LAAG…VALV).

The protein belongs to the NhaA Na(+)/H(+) (TC 2.A.33) antiporter family.

Its subcellular location is the cell inner membrane. It carries out the reaction Na(+)(in) + 2 H(+)(out) = Na(+)(out) + 2 H(+)(in). Na(+)/H(+) antiporter that extrudes sodium in exchange for external protons. The sequence is that of Na(+)/H(+) antiporter NhaA 2 from Myxococcus xanthus (strain DK1622).